The sequence spans 150 residues: Putative pre-16S rRNA nuclease (150 aa).

It belongs to the YqgF nuclease family.

Its subcellular location is the cytoplasm. Its function is as follows. Could be a nuclease involved in processing of the 5'-end of pre-16S rRNA. The sequence is that of Putative pre-16S rRNA nuclease from Chlamydia abortus (strain DSM 27085 / S26/3) (Chlamydophila abortus).